A 53-amino-acid polypeptide reads, in one-letter code: ATP synthase protein 8 (53 aa).

A helical membrane pass occupies residues 4–24 (MAPISWLLLFIVFSITFILFC).

Belongs to the ATPase protein 8 family. As to quaternary structure, F-type ATPases have 2 components, CF(1) - the catalytic core - and CF(0) - the membrane proton channel.

The protein localises to the mitochondrion membrane. In terms of biological role, mitochondrial membrane ATP synthase (F(1)F(0) ATP synthase or Complex V) produces ATP from ADP in the presence of a proton gradient across the membrane which is generated by electron transport complexes of the respiratory chain. F-type ATPases consist of two structural domains, F(1) - containing the extramembraneous catalytic core and F(0) - containing the membrane proton channel, linked together by a central stalk and a peripheral stalk. During catalysis, ATP synthesis in the catalytic domain of F(1) is coupled via a rotary mechanism of the central stalk subunits to proton translocation. Part of the complex F(0) domain. Minor subunit located with subunit a in the membrane. In Drosophila yakuba (Fruit fly), this protein is ATP synthase protein 8 (mt:ATPase8).